Reading from the N-terminus, the 469-residue chain is Mitochondrial distribution and morphology protein 10 (469 aa).

Belongs to the MDM10 family. In terms of assembly, component of the ER-mitochondria encounter structure (ERMES) or MDM complex, composed of MMM1, MDM10, MDM12 and MDM34. Associates with the mitochondrial outer membrane sorting assembly machinery SAM(core) complex.

Its subcellular location is the mitochondrion outer membrane. Functionally, component of the ERMES/MDM complex, which serves as a molecular tether to connect the endoplasmic reticulum and mitochondria. Components of this complex are involved in the control of mitochondrial shape and protein biogenesis and may function in phospholipid exchange. MDM10 is involved in the late assembly steps of the general translocase of the mitochondrial outer membrane (TOM complex). Functions in the TOM40-specific route of the assembly of outer membrane beta-barrel proteins, including the association of TOM40 with the receptor TOM22 and small TOM proteins. Can associate with the SAM(core) complex as well as the MDM12-MMM1 complex, both involved in late steps of the major beta-barrel assembly pathway, that is responsible for biogenesis of all outer membrane beta-barrel proteins. May act as a switch that shuttles between both complexes and channels precursor proteins into the TOM40-specific pathway. Plays a role in mitochondrial morphology and in the inheritance of mitochondria. This Scheffersomyces stipitis (strain ATCC 58785 / CBS 6054 / NBRC 10063 / NRRL Y-11545) (Yeast) protein is Mitochondrial distribution and morphology protein 10.